The sequence spans 1303 residues: Protein STU1 (1303 aa).

Disordered regions lie at residues 239–259 (RGSD…NTPV), 531–664 (SQRE…GAVS), and 953–977 (EASD…NSEH). The segment covering 249 to 259 (RANTPRSNTPV) has biased composition (polar residues). Basic and acidic residues predominate over residues 554 to 568 (SLKEAILEKNKELRQ). Over residues 573–583 (SRNSGEQSTKI) the composition is skewed to polar residues. Basic and acidic residues predominate over residues 596 to 609 (SRLEKSLLRPDVGH). A compositionally biased stretch (polar residues) spans 618–629 (SSWTYPSTQSGP). Over residues 634 to 648 (KQRERSKTEVHKKSP) the composition is skewed to basic and acidic residues. Composition is skewed to polar residues over residues 653–664 (RPSSRLDTGAVS) and 955–972 (SDSS…SSKR).

Belongs to the CLASP family. Interacts with microtubules.

Its subcellular location is the cytoplasm. It localises to the cytoskeleton. The protein localises to the nucleus. The protein resides in the spindle. Its function is as follows. Microtubule binding protein that promotes the stabilization of dynamic microtubules. Required for mitotic spindle formation. This is Protein STU1 (STU1) from Candida albicans (strain SC5314 / ATCC MYA-2876) (Yeast).